Here is a 40-residue protein sequence, read N- to C-terminus: MNRLGLVILGLIFGATAFMVGFMTYNLLWDSVKLITLLVR.

This is an uncharacterized protein from Sulfolobus acidocaldarius (strain ATCC 33909 / DSM 639 / JCM 8929 / NBRC 15157 / NCIMB 11770).